We begin with the raw amino-acid sequence, 511 residues long: Maturase K (511 aa).

This sequence belongs to the intron maturase 2 family. MatK subfamily.

It localises to the plastid. Its subcellular location is the chloroplast. Usually encoded in the trnK tRNA gene intron. Probably assists in splicing its own and other chloroplast group II introns. The sequence is that of Maturase K from Avena sativa (Oat).